A 700-amino-acid polypeptide reads, in one-letter code: Dipeptidyl aminopeptidase 1 (700 aa).

Positions M1 to A27 are cleaved as a signal peptide. 5 N-linked (GlcNAc...) asparagine glycosylation sites follow: N52, N144, N265, N337, and N373. A propeptide spanning residues D210–E369 is cleaved from the precursor. 2 disulfides stabilise this stretch: C395/C446 and C439/C478. Residue C398 is part of the active site. T416 carries the sulfothreonine modification. Chloride is bound by residues F450 and Y452. N-linked (GlcNAc...) asparagine glycans are attached at residues N481, N490, and N507. Y549 serves as a coordination point for chloride. N615 carries an N-linked (GlcNAc...) asparagine glycan. Residues H624 and N648 contribute to the active site. An N-linked (GlcNAc...) asparagine glycan is attached at N667.

This sequence belongs to the peptidase C1 family. As to quaternary structure, monomer. Chloride serves as cofactor.

Its subcellular location is the vacuole lumen. It localises to the parasitophorous vacuole lumen. It catalyses the reaction Release of an N-terminal dipeptide, Xaa-Yaa-|-Zaa-, except when Xaa is Arg or Lys, or Yaa or Zaa is Pro.. Thiol protease that cleaves dipeptides from the N-terminus of protein substrates. Active against a broad range of dipeptide substrates composed of both polar and hydrophobic amino acids. Proline cannot occupy the P1 position and arginine or lysine cannot occupy the P2 position of the substrate. Involved in host hemoglobin degradation by generating dipeptides from hemoglobin-derived oligopeptides. In Plasmodium falciparum (isolate 3D7), this protein is Dipeptidyl aminopeptidase 1.